The chain runs to 449 residues: 3-phosphoshikimate 1-carboxyvinyltransferase (449 aa).

The interval 1 to 29 (MSHDSVPSPITARAGTPLRGRLRPPGDKS) is disordered. K28, S29, and R33 together coordinate 3-phosphoshikimate. K28 provides a ligand contact to phosphoenolpyruvate. The phosphoenolpyruvate site is built by G101 and R129. Residues S175, Q177, D330, and K357 each contribute to the 3-phosphoshikimate site. Q177 is a binding site for phosphoenolpyruvate. Catalysis depends on D330, which acts as the Proton acceptor. Residues R361 and R405 each contribute to the phosphoenolpyruvate site.

It belongs to the EPSP synthase family. In terms of assembly, monomer.

It localises to the cytoplasm. The catalysed reaction is 3-phosphoshikimate + phosphoenolpyruvate = 5-O-(1-carboxyvinyl)-3-phosphoshikimate + phosphate. The protein operates within metabolic intermediate biosynthesis; chorismate biosynthesis; chorismate from D-erythrose 4-phosphate and phosphoenolpyruvate: step 6/7. Catalyzes the transfer of the enolpyruvyl moiety of phosphoenolpyruvate (PEP) to the 5-hydroxyl of shikimate-3-phosphate (S3P) to produce enolpyruvyl shikimate-3-phosphate and inorganic phosphate. The polypeptide is 3-phosphoshikimate 1-carboxyvinyltransferase (Methylobacterium sp. (strain 4-46)).